The sequence spans 637 residues: 3D-(3,5/4)-trihydroxycyclohexane-1,2-dione hydrolase (637 aa).

Glutamate 66 contacts thiamine diphosphate. Residues 442–522 form a thiamine pyrophosphate binding region; that stretch reads SLPGDLQRLW…INVLLFDNSG (81 aa). Residues aspartate 493 and asparagine 520 each coordinate Mg(2+).

This sequence belongs to the TPP enzyme family. The cofactor is Mg(2+). Thiamine diphosphate is required as a cofactor.

The catalysed reaction is 3D-3,5/4-trihydroxycyclohexane-1,2-dione + H2O = 5-deoxy-D-glucuronate + H(+). It functions in the pathway polyol metabolism; myo-inositol degradation into acetyl-CoA; acetyl-CoA from myo-inositol: step 3/7. Its function is as follows. Involved in the cleavage of the C1-C2 bond of 3D-(3,5/4)-trihydroxycyclohexane-1,2-dione (THcHDO) to yield 5-deoxy-glucuronate (5DG). This chain is 3D-(3,5/4)-trihydroxycyclohexane-1,2-dione hydrolase, found in Bacillus licheniformis (strain ATCC 14580 / DSM 13 / JCM 2505 / CCUG 7422 / NBRC 12200 / NCIMB 9375 / NCTC 10341 / NRRL NRS-1264 / Gibson 46).